The sequence spans 454 residues: Bifunctional protein GlmU (454 aa).

The segment at 1-226 (MSLEIVILAA…AMEVQGVNDR (226 aa)) is pyrophosphorylase. UDP-N-acetyl-alpha-D-glucosamine contacts are provided by residues 8–11 (LAAG), lysine 22, glutamine 73, 78–79 (GT), 99–101 (YGD), glycine 136, glutamate 151, asparagine 166, and asparagine 224. Residue aspartate 101 coordinates Mg(2+). Asparagine 224 lines the Mg(2+) pocket. The segment at 227–247 (MQQAQLERHYQRLRAEELMRQ) is linker. The tract at residues 248–454 (GVTLLDPQRL…NWKRPEKIRK (207 aa)) is N-acetyltransferase. The UDP-N-acetyl-alpha-D-glucosamine site is built by arginine 330 and lysine 348. Histidine 360 serves as the catalytic Proton acceptor. Tyrosine 363 and asparagine 374 together coordinate UDP-N-acetyl-alpha-D-glucosamine. Residues alanine 377, 383–384 (NY), serine 402, alanine 420, and arginine 437 contribute to the acetyl-CoA site.

The protein in the N-terminal section; belongs to the N-acetylglucosamine-1-phosphate uridyltransferase family. It in the C-terminal section; belongs to the transferase hexapeptide repeat family. In terms of assembly, homotrimer. It depends on Mg(2+) as a cofactor.

It localises to the cytoplasm. It carries out the reaction alpha-D-glucosamine 1-phosphate + acetyl-CoA = N-acetyl-alpha-D-glucosamine 1-phosphate + CoA + H(+). The enzyme catalyses N-acetyl-alpha-D-glucosamine 1-phosphate + UTP + H(+) = UDP-N-acetyl-alpha-D-glucosamine + diphosphate. It functions in the pathway nucleotide-sugar biosynthesis; UDP-N-acetyl-alpha-D-glucosamine biosynthesis; N-acetyl-alpha-D-glucosamine 1-phosphate from alpha-D-glucosamine 6-phosphate (route II): step 2/2. It participates in nucleotide-sugar biosynthesis; UDP-N-acetyl-alpha-D-glucosamine biosynthesis; UDP-N-acetyl-alpha-D-glucosamine from N-acetyl-alpha-D-glucosamine 1-phosphate: step 1/1. Its pathway is bacterial outer membrane biogenesis; LPS lipid A biosynthesis. In terms of biological role, catalyzes the last two sequential reactions in the de novo biosynthetic pathway for UDP-N-acetylglucosamine (UDP-GlcNAc). The C-terminal domain catalyzes the transfer of acetyl group from acetyl coenzyme A to glucosamine-1-phosphate (GlcN-1-P) to produce N-acetylglucosamine-1-phosphate (GlcNAc-1-P), which is converted into UDP-GlcNAc by the transfer of uridine 5-monophosphate (from uridine 5-triphosphate), a reaction catalyzed by the N-terminal domain. This Pseudomonas paraeruginosa (strain DSM 24068 / PA7) (Pseudomonas aeruginosa (strain PA7)) protein is Bifunctional protein GlmU.